A 210-amino-acid polypeptide reads, in one-letter code: Large ribosomal subunit protein bL25 (210 aa).

The tract at residues 175–210 is disordered; that stretch reads IATILPPQQEEEIDSGEQQEAGQPDAAEGRETTPEE. Residues 201 to 210 show a composition bias toward basic and acidic residues; the sequence is AEGRETTPEE.

This sequence belongs to the bacterial ribosomal protein bL25 family. CTC subfamily. Part of the 50S ribosomal subunit; part of the 5S rRNA/L5/L18/L25 subcomplex. Contacts the 5S rRNA. Binds to the 5S rRNA independently of L5 and L18.

In terms of biological role, this is one of the proteins that binds to the 5S RNA in the ribosome where it forms part of the central protuberance. This is Large ribosomal subunit protein bL25 from Geobacillus kaustophilus (strain HTA426).